The chain runs to 121 residues: Large ribosomal subunit protein bL20 (121 aa).

The protein belongs to the bacterial ribosomal protein bL20 family.

Binds directly to 23S ribosomal RNA and is necessary for the in vitro assembly process of the 50S ribosomal subunit. It is not involved in the protein synthesizing functions of that subunit. This is Large ribosomal subunit protein bL20 from Methylorubrum populi (strain ATCC BAA-705 / NCIMB 13946 / BJ001) (Methylobacterium populi).